The chain runs to 143 residues: Large ribosomal subunit protein uL13 (143 aa).

This sequence belongs to the universal ribosomal protein uL13 family. Part of the 50S ribosomal subunit.

This protein is one of the early assembly proteins of the 50S ribosomal subunit, although it is not seen to bind rRNA by itself. It is important during the early stages of 50S assembly. The protein is Large ribosomal subunit protein uL13 of Geobacter sulfurreducens (strain ATCC 51573 / DSM 12127 / PCA).